A 189-amino-acid chain; its full sequence is MEHKDPSQMYGTTILCIRRGNQVIIAGDGQVSLGQTVIKNSAKKIKRLANDTVITGFAGATADAFTLFERLESKLEKHPGQLLRACVELAKDWRMDKYLRRLEAMMIVADKSISLIISGNGDVLEPENGIAAIGSGGNYALAAAKALCETNERFSQNMTLEYTITTAMRIASEICIYTNNNIIIEKIED.

Residue T12 is part of the active site. Residues S172, C175, and T178 each coordinate Na(+).

This sequence belongs to the peptidase T1B family. HslV subfamily. As to quaternary structure, a double ring-shaped homohexamer of HslV is capped on each side by a ring-shaped HslU homohexamer. The assembly of the HslU/HslV complex is dependent on binding of ATP.

It localises to the cytoplasm. The catalysed reaction is ATP-dependent cleavage of peptide bonds with broad specificity.. Allosterically activated by HslU binding. Protease subunit of a proteasome-like degradation complex believed to be a general protein degrading machinery. This Ehrlichia canis (strain Jake) protein is ATP-dependent protease subunit HslV.